A 183-amino-acid chain; its full sequence is Large ribosomal subunit protein uL5 (183 aa).

The protein belongs to the universal ribosomal protein uL5 family. In terms of assembly, part of the 50S ribosomal subunit; part of the 5S rRNA/L5/L18/L25 subcomplex. Contacts the 5S rRNA and the P site tRNA. Forms a bridge to the 30S subunit in the 70S ribosome.

Functionally, this is one of the proteins that bind and probably mediate the attachment of the 5S RNA into the large ribosomal subunit, where it forms part of the central protuberance. In the 70S ribosome it contacts protein S13 of the 30S subunit (bridge B1b), connecting the 2 subunits; this bridge is implicated in subunit movement. Contacts the P site tRNA; the 5S rRNA and some of its associated proteins might help stabilize positioning of ribosome-bound tRNAs. The chain is Large ribosomal subunit protein uL5 from Fusobacterium nucleatum subsp. nucleatum (strain ATCC 25586 / DSM 15643 / BCRC 10681 / CIP 101130 / JCM 8532 / KCTC 2640 / LMG 13131 / VPI 4355).